We begin with the raw amino-acid sequence, 153 residues long: Transcriptional repressor NrdR (153 aa).

The segment at 3–34 (CPFCNNINTQVKDSRAIEDDILIRRRRICLVC) is a zinc-finger region. Residues 49 to 139 (FMVIKKNGET…VYMNFKNIND (91 aa)) enclose the ATP-cone domain.

Belongs to the NrdR family. Requires Zn(2+) as cofactor.

In terms of biological role, negatively regulates transcription of bacterial ribonucleotide reductase nrd genes and operons by binding to NrdR-boxes. The polypeptide is Transcriptional repressor NrdR (Ehrlichia canis (strain Jake)).